The sequence spans 526 residues: G-protein coupled receptor 161 (526 aa).

Over 1 to 27 (MNGSKNGTAVANSTNGLDDNGLMVLES) the chain is Extracellular. N-linked (GlcNAc...) asparagine glycosylation is found at N2, N6, and N12. A helical transmembrane segment spans residues 28–48 (VSIIIIAILACLGNLVIVVTL). Residues 49 to 60 (YKKPYLLTPSNK) lie on the Cytoplasmic side of the membrane. Residues 61–81 (FVFSLTSSNLLLSVLMLPFVV) traverse the membrane as a helical segment. The Extracellular portion of the chain corresponds to 82–98 (ASSVRRDWMFGVVWCNF). C96 and C174 form a disulfide bridge. N97 carries an N-linked (GlcNAc...) asparagine glycan. The helical transmembrane segment at 99–119 (TALLHLLVSSSSMLTLGAIAI) threads the bilayer. The Cytoplasmic segment spans residues 120-139 (DRYYAVLYPMIYPMKITGNR). Residues 140 to 160 (AVLAIVYIWLHSLVGCLPPLF) form a helical membrane-spanning segment. At 161–186 (GWSSFEFDRFKWTCTVSWHKEISYTA) the chain is on the extracellular side. Residues 187–207 (FWVTWCCLLPLVAMLVCYGVI) form a helical membrane-spanning segment. Over 208–263 (FRVARIKARKVYCGSVVVSQEESSSQNNGRKNSNTSTSSSGSRKSLIYSGSQCKAF) the chain is Cytoplasmic. The segment at 231-250 (SSQNNGRKNSNTSTSSSGSR) is disordered. A helical membrane pass occupies residues 264–284 (ITILVVLGTFLTTWGPYVVVI). Over 285 to 300 (STEALLGKNSVSPQVE) the chain is Extracellular. A helical transmembrane segment spans residues 301–321 (TLVSWLSFTSAVCHPLIYGLW). The Cytoplasmic segment spans residues 322 to 526 (NKTVRKELLG…EEEMEREEKM (205 aa)). Positions 505–526 (IDEGIVKDDDDDEEEMEREEKM) are disordered. Positions 512–526 (DDDDDEEEMEREEKM) are enriched in acidic residues.

Belongs to the G-protein coupled receptor 1 family.

It is found in the cell projection. Its subcellular location is the cilium membrane. The protein resides in the cell membrane. Key negative regulator of Shh signaling during neural tube development. Recruited to primary cilia and acts as a regulator of the PKA-dependent basal repression machinery in Shh signaling by increasing cAMP levels, leading to promote the PKA-dependent processing of gli3 into gli3r and repress the Shh signaling. In presence of shh, it is removed from primary cilia, preventing its activity and allowing activation of the Shh signaling. Required in left/right patterning by modulating Ca(2+) levels in the cells surrounding the Kupffer vesicle. This is G-protein coupled receptor 161 (gpr161) from Danio rerio (Zebrafish).